Reading from the N-terminus, the 224-residue chain is MSADFEGYEQDFAVLTAEITSKISRVPRLPPDEKKQMVANVEKQLEEARELLEQMDLEVREIPPQSRGMYSNRMRSYKQEMGKLETDFKRSRIAYSDEVRNELLGDAGNSSENQLIKLREERAHLLDNTERLERSSRRLEAGYQIAVETEQIGQEMLENLSHDRERIQRARERLRETDANLGKSSRILTGMLRRIIQNRILLVILGIIVVITILTAITFFVRGH.

The Cytoplasmic portion of the chain corresponds to 1–199 (MSADFEGYEQ…GMLRRIIQNR (199 aa)). Coiled-coil stretches lie at residues 31 to 92 (PDEK…KRSR) and 106 to 185 (DAGN…GKSS). A helical; Anchor for type IV membrane protein membrane pass occupies residues 200–220 (ILLVILGIIVVITILTAITFF). The Vesicular portion of the chain corresponds to 221–224 (VRGH).

It belongs to the VTI1 family. In terms of assembly, interacts with distinct SNARE complexes that contain either STX5 or STX6. Interacts with NAPA and, to a lesser extent, with NAPG. Identified in a complex containing STX6, STX12, VAMP4 and VTI1A. In terms of tissue distribution, specifically expressed in the neuronal tissues cerebellum, cortex and hippocampus. Isoform 1/VTI1A is expressed in the same neuronal tissues but also in lung, liver, kidney and spleen.

It is found in the membrane. The protein resides in the cytoplasmic vesicle. It localises to the secretory vesicle. Its subcellular location is the synaptic vesicle membrane. The protein localises to the clathrin-coated vesicle membrane. It is found in the golgi apparatus membrane. In terms of biological role, V-SNARE that mediates vesicle transport pathways through interactions with t-SNAREs on the target membrane. These interactions are proposed to mediate aspects of the specificity of vesicle trafficking and to promote fusion of the lipid bilayers. Involved in vesicular transport from the late endosomes to the trans-Golgi network. Along with VAMP7, involved in an non-conventional RAB1-dependent traffic route to the cell surface used by KCNIP1 and KCND2. May be concerned with increased secretion of cytokines associated with cellular senescence. The protein is Vesicle transport through interaction with t-SNAREs homolog 1A (Vti1a) of Rattus norvegicus (Rat).